Here is a 734-residue protein sequence, read N- to C-terminus: Photosystem I P700 chlorophyll a apoprotein A2 (734 aa).

Helical transmembrane passes span 46 to 69 (IFAS…FHVA), 135 to 158 (LYTG…LHLQ), 175 to 199 (LNHH…HVAI), 273 to 291 (IAHH…GHMY), 330 to 353 (IHFQ…QHMY), 369 to 395 (AALY…IFFI), 417 to 439 (AIIS…LYVH), and 517 to 535 (FLVH…LILV). Positions 559 and 568 each coordinate [4Fe-4S] cluster. 2 helical membrane passes run 575 to 596 (AFYL…YWHW) and 643 to 665 (LSVW…MFLI). The chlorophyll a site is built by His654, Met662, and Tyr670. Trp671 contributes to the phylloquinone binding site. A helical membrane pass occupies residues 707-727 (LVGLAHFSVGYIFTYAAFLIA).

This sequence belongs to the PsaA/PsaB family. In terms of assembly, the PsaA/B heterodimer binds the P700 chlorophyll special pair and subsequent electron acceptors. PSI consists of a core antenna complex that captures photons, and an electron transfer chain that converts photonic excitation into a charge separation. The eukaryotic PSI reaction center is composed of at least 11 subunits. The cofactor is P700 is a chlorophyll a/chlorophyll a' dimer, A0 is one or more chlorophyll a, A1 is one or both phylloquinones and FX is a shared 4Fe-4S iron-sulfur center..

It is found in the plastid. It localises to the chloroplast thylakoid membrane. It carries out the reaction reduced [plastocyanin] + hnu + oxidized [2Fe-2S]-[ferredoxin] = oxidized [plastocyanin] + reduced [2Fe-2S]-[ferredoxin]. Functionally, psaA and PsaB bind P700, the primary electron donor of photosystem I (PSI), as well as the electron acceptors A0, A1 and FX. PSI is a plastocyanin-ferredoxin oxidoreductase, converting photonic excitation into a charge separation, which transfers an electron from the donor P700 chlorophyll pair to the spectroscopically characterized acceptors A0, A1, FX, FA and FB in turn. Oxidized P700 is reduced on the lumenal side of the thylakoid membrane by plastocyanin. The polypeptide is Photosystem I P700 chlorophyll a apoprotein A2 (Aethionema grandiflorum (Persian stone-cress)).